We begin with the raw amino-acid sequence, 274 residues long: Envelope glycoprotein L (274 aa).

Positions 1–21 are cleaved as a signal peptide; that stretch reads MMPLLLLILLSTRNLLGAAQS. In terms of domain architecture, gL betaherpesvirus-type spans 51 to 251; it reads VEHKCREALA…RSYRDRFPAV (201 aa). Residues cysteine 156 and cysteine 161 are joined by a disulfide bond.

Belongs to the herpesviridae glycoprotein L (gL) family. Betaherpesvirinae gL subfamily. In terms of assembly, interacts with glycoprotein H (gH); this interaction is necessary for the correct processing and cell surface expression of gH.

It localises to the virion membrane. Its subcellular location is the host cell membrane. The protein localises to the host Golgi apparatus. It is found in the host trans-Golgi network. Its function is as follows. The heterodimer glycoprotein H-glycoprotein L is required for the fusion of viral and plasma membranes leading to virus entry into the host cell. Acts as a functional inhibitor of gH and maintains gH in an inhibited form. Upon binding to host integrins, gL dissociates from gH leading to activation of the viral fusion glycoproteins gB and gH. The polypeptide is Envelope glycoprotein L (Mus musculus (Mouse)).